The following is an 82-amino-acid chain: Polyferredoxin protein FwdG (82 aa).

4Fe-4S ferredoxin-type domains lie at 4–33 and 51–80; these read YELV…PETW and VVTV…LVFK. Positions 13, 16, 19, 23, 60, 63, 66, and 70 each coordinate [4Fe-4S] cluster.

[4Fe-4S] cluster serves as cofactor.

This chain is Polyferredoxin protein FwdG (fwdG), found in Methanocaldococcus jannaschii (strain ATCC 43067 / DSM 2661 / JAL-1 / JCM 10045 / NBRC 100440) (Methanococcus jannaschii).